Reading from the N-terminus, the 185-residue chain is A-type ATP synthase subunit E (185 aa).

It belongs to the V-ATPase E subunit family. In terms of assembly, has multiple subunits with at least A(3), B(3), C, D, E, F, H, I and proteolipid K(x).

Its subcellular location is the cell membrane. Functionally, component of the A-type ATP synthase that produces ATP from ADP in the presence of a proton gradient across the membrane. This Thermoplasma acidophilum (strain ATCC 25905 / DSM 1728 / JCM 9062 / NBRC 15155 / AMRC-C165) protein is A-type ATP synthase subunit E.